We begin with the raw amino-acid sequence, 219 residues long: Transmembrane protein 17B (219 aa).

A glycan (N-linked (GlcNAc...) asparagine) is linked at Asn-26. A run of 4 helical transmembrane segments spans residues 51-71 (MMLYFNAFFFPFWIISEIITM), 84-104 (ILLTTSLVILTLVESLRLYIG), 116-136 (LAGFLILTLLIQLPLLLFLLT), and 147-167 (LAVHMIYLMFINAEIVISFLV). N-linked (GlcNAc...) asparagine glycosylation is found at Asn-195 and Asn-203.

It belongs to the TMEM17 family. Part of the tectonic-like complex (also named B9 complex).

The protein localises to the cell projection. It localises to the cilium membrane. Transmembrane component of the tectonic-like complex, a complex localized at the transition zone of primary cilia and acting as a barrier that prevents diffusion of transmembrane proteins between the cilia and plasma membranes. Required for ciliogenesis and sonic hedgehog/SHH signaling. This Xenopus tropicalis (Western clawed frog) protein is Transmembrane protein 17B (Tmem17-b).